An 83-amino-acid polypeptide reads, in one-letter code: Apolipoprotein C-I, acidic form (83 aa).

Residues 1–26 form the signal peptide; that stretch reads MRLFLSLPVLVVVLSMVLEGPAPAQG.

It belongs to the apolipoprotein C1 family.

The protein resides in the secreted. The sequence is that of Apolipoprotein C-I, acidic form (APOC1A) from Pan troglodytes (Chimpanzee).